A 373-amino-acid chain; its full sequence is Putative glutamate--cysteine ligase 2-2 (373 aa).

Belongs to the glutamate--cysteine ligase type 2 family. YbdK subfamily.

It catalyses the reaction L-cysteine + L-glutamate + ATP = gamma-L-glutamyl-L-cysteine + ADP + phosphate + H(+). In terms of biological role, ATP-dependent carboxylate-amine ligase which exhibits weak glutamate--cysteine ligase activity. The polypeptide is Putative glutamate--cysteine ligase 2-2 (Legionella pneumophila (strain Corby)).